A 410-amino-acid chain; its full sequence is Cell division protein FtsZ (410 aa).

GTP-binding positions include 22–26 (GGGGN), 109–111 (GTG), E140, R144, and D188. The tract at residues 318–410 (ESKKDRKPHR…STPPFFRRKR (93 aa)) is disordered. Residues 330 to 344 (RQAVQPMQQTTQSVE) are compositionally biased toward polar residues. The span at 360-398 (WDIRREQNTRPKVDESSLEQVDKKEFDTFHREEPNHNDD) shows a compositional bias: basic and acidic residues.

Belongs to the FtsZ family. Homodimer. Polymerizes to form a dynamic ring structure in a strictly GTP-dependent manner. Interacts directly with several other division proteins.

The protein resides in the cytoplasm. Its function is as follows. Essential cell division protein that forms a contractile ring structure (Z ring) at the future cell division site. The regulation of the ring assembly controls the timing and the location of cell division. One of the functions of the FtsZ ring is to recruit other cell division proteins to the septum to produce a new cell wall between the dividing cells. Binds GTP and shows GTPase activity. The polypeptide is Cell division protein FtsZ (Enterococcus faecalis (strain ATCC 700802 / V583)).